A 150-amino-acid polypeptide reads, in one-letter code: Single-stranded DNA-binding protein rim1, mitochondrial (150 aa).

Residues 1–22 constitute a mitochondrion transit peptide; that stretch reads MLFLKSSRAFSKRLFSSSTVRY. The 101-residue stretch at 25-125 folds into the SSB domain; sequence IQRLTLTGNL…HVSADVLFYP (101 aa). The disordered stretch occupies residues 127 to 150; that stretch reads NKNGDESGEETHPELDADPMINSF. Basic and acidic residues predominate over residues 128 to 141; it reads KNGDESGEETHPEL.

The protein resides in the mitochondrion. This protein binds preferentially and cooperatively to ss-DNA. Involved in mitochondrial DNA replication. This Schizosaccharomyces pombe (strain 972 / ATCC 24843) (Fission yeast) protein is Single-stranded DNA-binding protein rim1, mitochondrial (rim1).